The chain runs to 330 residues: Aspartate--ammonia ligase (330 aa).

This sequence belongs to the class-II aminoacyl-tRNA synthetase family. AsnA subfamily.

It localises to the cytoplasm. It catalyses the reaction L-aspartate + NH4(+) + ATP = L-asparagine + AMP + diphosphate + H(+). It functions in the pathway amino-acid biosynthesis; L-asparagine biosynthesis; L-asparagine from L-aspartate (ammonia route): step 1/1. This is Aspartate--ammonia ligase from Escherichia coli (strain SMS-3-5 / SECEC).